The sequence spans 191 residues: Protein Ves (191 aa).

This sequence belongs to the Ves family.

This is Protein Ves from Escherichia coli O127:H6 (strain E2348/69 / EPEC).